The following is a 205-amino-acid chain: Inactive ribonuclease-like protein 9 (205 aa).

The signal sequence occupies residues 1-24; sequence MMLITTHSLLLLLLLLQLLQPLQF. Cystine bridges form between Cys97–Cys152, Cys115–Cys167, and Cys122–Cys129. N-linked (GlcNAc...) asparagine glycosylation is found at Asn130 and Asn142.

It belongs to the pancreatic ribonuclease family.

It localises to the secreted. Its function is as follows. Does not exhibit any ribonuclease activity. The sequence is that of Inactive ribonuclease-like protein 9 (RNASE9) from Cebus capucinus (White-faced sapajou).